We begin with the raw amino-acid sequence, 307 residues long: Dioxygenase cdmD (307 aa).

Residues H146, D148, and H226 each contribute to the Fe cation site.

The protein belongs to the PhyH family. Homodimer. Requires Fe cation as cofactor.

The enzyme catalyses verruculide A + 2-oxoglutarate + O2 = chrodrimanin T + succinate + CO2. It catalyses the reaction chrodrimanin E + 2-oxoglutarate + O2 = chrodrimanin A + succinate + CO2. Its pathway is secondary metabolite biosynthesis; terpenoid biosynthesis. Dioxygenase; part of the gene cluster that mediates the biosynthesis of chrodrimanin B, a meroterpenoid that acts as a potent blocker of insect GABA-gated chloride channels. The first step of the pathway is the biosynthesis of 6-hydroxymellein by the polyketide synthase cdmE. The prenyltransferase cdmH acts as a 6-hydroxymellein 5-farnesyltransferase and produces the hydrophobic metabolite verruculide C. The FAD-dependent monooxygenase cdmI further converts verruculide C into verruculide B. The terpene cyclase cdmG then produced the pentacyclic molecule 3-hydroxypentacecilide A, the backbone structure of chrodrimanin B, via folding the farnesyl moiety of the substrate into the chair-boat conformation. The short-chain dehydrogenase/reductase cdmF functions as the 3-OH dehydrogenase that oxidizes the C-3 hydroxyl group of 3-hydroxypentacecilide A and produces chrodrimanin C, the dehydrogenated product of 3-hydroxypentacecilide A. The cytochrome P450 monooxygenase cdmJ then accepts both 3-hydroxypentacecilide A and chrodrimanin C and functions as a C-7-beta-hydroxylase to produce respectively chrodrimanin H and chrodrimanin F. The dioxygenase cdmA accepts chrodrimanin H to afford chrodrimanin E, which is further transformed to chrodrimanin A by the dioxygenase cdmD. CdmA can also accept chrodrimanin C as substrate to convert it into verruculide A, which is further converted into chrodrimanin T by cdmD. The last step of the biosynthesis is proposed to be performed by the acetyltransferase cdmC which acetylates chrodrimanin A to yield chrodrimanin B. The pathway may also lead to the production of additional shunt products, including chrodrimanins T and U. This Talaromyces verruculosus (Penicillium verruculosum) protein is Dioxygenase cdmD.